Reading from the N-terminus, the 981-residue chain is DNA ligase 4 (981 aa).

E320, K322, R327, E380, F424, E484, K489, K506, and K508 together coordinate ATP. K322 acts as the N6-AMP-lysine intermediate in catalysis. Mg(2+) is bound at residue E380. E484 lines the Mg(2+) pocket. The disordered stretch occupies residues 544–563 (SEKNNPSSYESGSDSDSDSE). BRCT domains are found at residues 721-819 (SKAD…PKYV) and 875-980 (ERLL…EYAA).

This sequence belongs to the ATP-dependent DNA ligase family. Mg(2+) serves as cofactor.

Its subcellular location is the nucleus. The catalysed reaction is ATP + (deoxyribonucleotide)n-3'-hydroxyl + 5'-phospho-(deoxyribonucleotide)m = (deoxyribonucleotide)n+m + AMP + diphosphate.. In terms of biological role, DNA ligase involved in DNA non-homologous end joining (NHEJ); required for double-strand break (DSB) repair. In Eremothecium gossypii (strain ATCC 10895 / CBS 109.51 / FGSC 9923 / NRRL Y-1056) (Yeast), this protein is DNA ligase 4 (LIG4).